The sequence spans 462 residues: Elongation factor 1-alpha (462 aa).

Gly2 is modified (blocked amino end (Gly)). The tr-type G domain maps to 5–242; it reads KIHINIVVIG…DAILPPSRPT (238 aa). The interval 14–21 is G1; it reads GHVDSGKS. Position 14-21 (14-21) interacts with GTP; that stretch reads GHVDSGKS. Lys36 carries the post-translational modification N6,N6,N6-trimethyllysine. N6-methyllysine is present on Lys55. Residues 70–74 are G2; sequence GITID. At Lys79 the chain carries N6,N6,N6-trimethyllysine. Residues 91-94 are G3; sequence DAPG. GTP is bound by residues 91–95 and 153–156; these read DAPGH and NKMD. Positions 153-156 are G4; that stretch reads NKMD. A G5 region spans residues 194-196; the sequence is SGW. N6,N6,N6-trimethyllysine occurs at positions 219 and 318. Glu374 carries the post-translational modification 5-glutamyl glycerylphosphorylethanolamine.

Belongs to the TRAFAC class translation factor GTPase superfamily. Classic translation factor GTPase family. EF-Tu/EF-1A subfamily. The N-terminus is blocked.

It is found in the cytoplasm. Its function is as follows. This protein promotes the GTP-dependent binding of aminoacyl-tRNA to the A-site of ribosomes during protein biosynthesis. This chain is Elongation factor 1-alpha, found in Artemia salina (Brine shrimp).